The primary structure comprises 194 residues: Naphthalene 1,2-dioxygenase system, small oxygenase component (194 aa).

It belongs to the bacterial ring-hydroxylating dioxygenase beta subunit family. In terms of assembly, the naphthalene dioxygenase (NDO) multicomponent enzyme system is composed of an electron transfer component and a dioxygenase component (iron sulfur protein (ISP)). The electron transfer component is composed of a ferredoxin reductase (NdoR) and a ferredoxin (NdoA), and the dioxygenase component is formed of a heterohexamer (trimer of heterodimers) of three large alpha subunits (NdoB) and three small beta subunits (NdoC).

It participates in aromatic compound metabolism; naphthalene degradation. In terms of biological role, component of the naphthalene dioxygenase (NDO) multicomponent enzyme system which catalyzes the incorporation of both atoms of molecular oxygen into naphthalene to form cis-(1R,2S)-dihydroxy-1,2-dihydronaphthalene. The beta subunit seems to have a structural role in the holoenzyme. Also able to catalyze the cis-dihydroxylation of biphenyl and phenanthrene. This is Naphthalene 1,2-dioxygenase system, small oxygenase component from Pseudomonas putida (Arthrobacter siderocapsulatus).